The sequence spans 493 residues: Flagellin (493 aa).

It belongs to the bacterial flagellin family.

It localises to the secreted. It is found in the bacterial flagellum. Flagellin is the subunit protein which polymerizes to form the filaments of bacterial flagella. This chain is Flagellin (fliC), found in Salmonella rubislaw.